Here is a 353-residue protein sequence, read N- to C-terminus: Putative glycosyltransferase TagX (353 aa).

This sequence belongs to the glycosyltransferase 2 family.

The protein is Putative glycosyltransferase TagX (tagX) of Staphylococcus aureus (strain MRSA252).